We begin with the raw amino-acid sequence, 436 residues long: Proteasome-activating nucleotidase (436 aa).

Residues 7–98 (KDVRDLCEKF…LRSDLQRMKK (92 aa)) adopt a coiled-coil conformation. Residues 223-228 (GTGKTL) and H362 each bind ATP. A docks into pockets in the proteasome alpha-ring to cause gate opening region spans residues 434–436 (AYH).

It belongs to the AAA ATPase family. As to quaternary structure, homohexamer. The hexameric complex has a two-ring architecture resembling a top hat that caps the 20S proteasome core at one or both ends. Upon ATP-binding, the C-terminus of PAN interacts with the alpha-rings of the proteasome core by binding to the intersubunit pockets.

It is found in the cytoplasm. Its function is as follows. ATPase which is responsible for recognizing, binding, unfolding and translocation of substrate proteins into the archaeal 20S proteasome core particle. Is essential for opening the gate of the 20S proteasome via an interaction with its C-terminus, thereby allowing substrate entry and access to the site of proteolysis. Thus, the C-termini of the proteasomal ATPase function like a 'key in a lock' to induce gate opening and therefore regulate proteolysis. Unfolding activity requires energy from ATP hydrolysis, whereas ATP binding alone promotes ATPase-20S proteasome association which triggers gate opening, and supports translocation of unfolded substrates. The polypeptide is Proteasome-activating nucleotidase (Methanopyrus kandleri (strain AV19 / DSM 6324 / JCM 9639 / NBRC 100938)).